The chain runs to 306 residues: Dermonecrotic toxin LiSicTox-alphaIA1a (306 aa).

An N-terminal signal peptide occupies residues 1-18 (MLPYIVLVLGCWSVLSQA). A propeptide spanning residues 19–26 (AQTDDEER) is cleaved from the precursor. Histidine 38 is a catalytic residue. Mg(2+) contacts are provided by glutamate 58 and aspartate 60. The Nucleophile role is filled by histidine 74. 2 disulfides stabilise this stretch: cysteine 78/cysteine 84 and cysteine 80/cysteine 223. Mg(2+) is bound at residue aspartate 118.

It belongs to the arthropod phospholipase D family. Class II subfamily. Class IIa sub-subfamily. The cofactor is Mg(2+). As to expression, expressed by the venom gland.

Its subcellular location is the secreted. It catalyses the reaction an N-(acyl)-sphingosylphosphocholine = an N-(acyl)-sphingosyl-1,3-cyclic phosphate + choline. It carries out the reaction an N-(acyl)-sphingosylphosphoethanolamine = an N-(acyl)-sphingosyl-1,3-cyclic phosphate + ethanolamine. The catalysed reaction is a 1-acyl-sn-glycero-3-phosphocholine = a 1-acyl-sn-glycero-2,3-cyclic phosphate + choline. The enzyme catalyses a 1-acyl-sn-glycero-3-phosphoethanolamine = a 1-acyl-sn-glycero-2,3-cyclic phosphate + ethanolamine. It catalyses the reaction 1-hexadecanoyl-sn-glycero-3-phosphocholine = 1-hexadecanoyl-sn-glycero-2,3-cyclic phosphate + choline. With respect to regulation, catalytic activity and hemolysis are inhibited by divalent ion chelators (1,10-phenanthroline, EDTA, and EGTA). Dermonecrotic toxins cleave the phosphodiester linkage between the phosphate and headgroup of certain phospholipids (sphingolipid and lysolipid substrates), forming an alcohol (often choline) and a cyclic phosphate. This toxin acts on sphingomyelin (SM) with high activity. It discriminate between the number of carbon atoms in the substrates, since it prefers SM with six carbons in the fatty acid chain (SM6:0) to other SMs (SM12:0 &gt; SM16:0 &gt; SM18:0 &gt; SM2:0 &gt; SM24:0). It also acts on lysophosphatidylcholine (LPC) (LPC16:0 = LPC12:0 &gt; LPC18:0), and lyso-platelet activating factor (LPAF, an alkyl-LPC) but not on phosphatidylcholine (PC). It may also act on ceramide phosphoethanolamine (CPE), lysophosphatidylcholine (LPC) and lysophosphatidylethanolamine (LPE), but not on lysophosphatidylserine (LPS), and lysophosphatidylglycerol (LPG). It acts by transphosphatidylation, releasing exclusively cyclic phosphate products as second products. In vivo, it induces dermonecrosis, vascular permeability, platelet aggregation, inflammatory response, edema and cytotoxicity against renal epithelial cells. It causes direct nephrotoxicity and is directly toxic to liver. It also induces hemolysis in a complement-dependent manner as well as in a complement-independent manner. The hemolysis provoked in a complement-independent manner is composed of several steps. The toxin binds to erythrocyte membranes, hydrolyzes membrane phospholipids (SM and LPC) thus generating metabolism products that cause hemolysis, probably by provoking an increase of calcium inside cells. The calcium influx is due to the opening of L-type calcium channels, since L-type calcium channel blockers inhibit calcium influx. Is lethal to mice when intraperitoneally injected. This Loxosceles intermedia (Brown spider) protein is Dermonecrotic toxin LiSicTox-alphaIA1a.